Here is a 177-residue protein sequence, read N- to C-terminus: MNLTYRAAEGVAESNHLLLANMIVTIVVFLLLLILLKKFAWGPLVNMMKAREEHVASEINSAEKSRKDAEVYVEQQQAELNKARTEARDLLEASRRQAEAEQARAMEQARVETELSKEEARRAIERERAEAQAALKNDVALQAIAAARHVMKTQLATDEAAQRALVDQFLADTKGTN.

The helical transmembrane segment at 16–36 (HLLLANMIVTIVVFLLLLILL) threads the bilayer.

The protein belongs to the ATPase B chain family. F-type ATPases have 2 components, F(1) - the catalytic core - and F(0) - the membrane proton channel. F(1) has five subunits: alpha(3), beta(3), gamma(1), delta(1), epsilon(1). F(0) has three main subunits: a(1), b(2) and c(10-14). The alpha and beta chains form an alternating ring which encloses part of the gamma chain. F(1) is attached to F(0) by a central stalk formed by the gamma and epsilon chains, while a peripheral stalk is formed by the delta and b chains.

The protein resides in the cell membrane. In terms of biological role, f(1)F(0) ATP synthase produces ATP from ADP in the presence of a proton or sodium gradient. F-type ATPases consist of two structural domains, F(1) containing the extramembraneous catalytic core and F(0) containing the membrane proton channel, linked together by a central stalk and a peripheral stalk. During catalysis, ATP synthesis in the catalytic domain of F(1) is coupled via a rotary mechanism of the central stalk subunits to proton translocation. Functionally, component of the F(0) channel, it forms part of the peripheral stalk, linking F(1) to F(0). This is ATP synthase subunit b from Exiguobacterium sibiricum (strain DSM 17290 / CCUG 55495 / CIP 109462 / JCM 13490 / 255-15).